The primary structure comprises 296 residues: Nucleotide-binding protein SUB0630 (296 aa).

Residue 13–20 (GMSGAGKT) coordinates ATP. 63 to 66 (DMRS) is a GTP binding site.

This sequence belongs to the RapZ-like family.

Functionally, displays ATPase and GTPase activities. This chain is Nucleotide-binding protein SUB0630, found in Streptococcus uberis (strain ATCC BAA-854 / 0140J).